Consider the following 245-residue polypeptide: MMDPNSTSEDVKFTPDPYQVPFVQAFDQATRVYQDLGGPSQAPLPCVLWPVLPEPLPQGQLTAYHVSTAPTGSWFSAPQPAPENAYQAYAAPQLFPVSDITQNQQTNQAGGEAPQPGDNSTVQTAAAVVFACPGANQGQQLADIGVPQPAPVAAPARRTRKPQQPESLEECDSELEIKRYKNRVASRKCRAKFKQLLQHYREVAAAKSSENDRLRLLLKQMCPSLDVDSIIPRTPDVLHEDLLNF.

The transactivation stretch occupies residues 1–167 (MMDPNSTSED…RTRKPQQPES (167 aa)). A phosphothreonine; by host mark is found at Thr14 and Thr159. The short motif at 157–194 (RRTRKPQQPESLEECDSELEIKRYKNRVASRKCRAKFK) is the Bipartite nuclear localization signal element. Residues Ser167, Ser173, and Ser186 each carry the phosphoserine; by host modification. Residues 170–228 (ECDSELEIKRYKNRVASRKCRAKFKQLLQHYREVAAAKSSENDRLRLLLKQMCPSLDVD) form the bZIP domain. Positions 178–195 (KRYKNRVASRKCRAKFKQ) are basic motif. A leucine-zipper region spans residues 196–228 (LLQHYREVAAAKSSENDRLRLLLKQMCPSLDVD). The tract at residues 229 to 245 (SIIPRTPDVLHEDLLNF) is accessory activation domain.

Belongs to the bZIP family. As to quaternary structure, homodimer. Interacts (via b-ZIP domain) with the DNA polymerase processivity factor BMRF1 (via N-terminus); this interaction may inhibit BZLF1-induced transcription of the BMRF1 promoter. Interacts with human UBN1, CRTC2 and RACK1. Interacts (via N-terminus) with human PAX5 (via N-terminus); this interaction inhibits BZLF1-mediated lytic viral reactivation. Interacts (via leucine-zipper domain) with host CEBPA; this interaction induces G1 host cell cycle arrest. Interacts (via C-terminus) with host TP53BP1 (via C-terminus); this interaction is involved in the activation of the viral lytic cycle. Interacts with host chromatin-remodeling ATPase INO80; this interaction participates to the activation of early lytic viral genes by BZLF1. Interacts with host regulator of chromatin SMARCA5/hSNF2H; this interaction participates to the activation of early lytic viral genes by BZLF1. Interacts with host PLSCR1/Phospholipid scramblase 1; this interaction negatively regulates the transcriptional regulatory activity of BZLF1 by preventing the formation of the BZLF1-CBP complex.

The protein localises to the host nucleus. In terms of biological role, transcription factor that acts as a molecular switch to induce the transition from the latent to the lytic or productive phase of the virus cycle. Mediates the switch from the latent to the lytic cycle of infection in cells containing a highly methylated viral genome. Probably binds to silenced chromatin and recruits host chromatin-remodeling enzymes. Regulates this switch by binding to 2 types of ZEBRA response elements (ZREs): the CpG-free AP-1 like elements (latency) and the methylated CpG-containing elements (lytic replication). Activates preferentially the methylated forms of the viral lytic R (BRLF1) and Na (BRRF1) gene promoters, the latters being the first genes activated during Z-mediated reactivation in latently infected cells. BZLF1 and BRLF1 act together to trigger lytic replication. Also binds the lytic origin of replication, oriLyt. Induces G1 cell cycle arrest by stabilizing the host CCAAT/enhancer binding protein CEBPA. This function is important because the lytic cycle preferentially takes place in host cells arrested in G1. The protein is Lytic switch protein BZLF1 of Epstein-Barr virus (strain B95-8) (HHV-4).